A 228-amino-acid chain; its full sequence is RNA pyrophosphohydrolase (228 aa).

The unknown stretch occupies residues 1–70 (MEKRSGIGRL…KQWVKMMNDI (70 aa)). The interval 71–228 (VIDKRGFRLG…VLTEFAEFIR (158 aa)) is rppH domain. The 146-residue stretch at 76–221 (GFRLGVGMVI…KRDVYQKVLT (146 aa)) folds into the Nudix hydrolase domain. A Nudix box motif is present at residues 109–130 (GGLLPNETLREALNRELDEEVG).

This sequence in the C-terminal section; belongs to the Nudix hydrolase family. RppH subfamily. A divalent metal cation is required as a cofactor.

In terms of biological role, accelerates the degradation of transcripts by removing pyrophosphate from the 5'-end of triphosphorylated RNA, leading to a more labile monophosphorylated state that can stimulate subsequent ribonuclease cleavage. In Coxiella burnetii (strain RSA 493 / Nine Mile phase I), this protein is RNA pyrophosphohydrolase.